We begin with the raw amino-acid sequence, 442 residues long: ATP-dependent protease ATPase subunit HslU (442 aa).

Residues isoleucine 18 and 60–65 (GVGKTE) each bind ATP. The disordered stretch occupies residues 136 to 156 (LPKPKNDWDSTDSDANSNTRQ). The ATP site is built by aspartate 255, glutamate 320, and arginine 392.

The protein belongs to the ClpX chaperone family. HslU subfamily. As to quaternary structure, a double ring-shaped homohexamer of HslV is capped on each side by a ring-shaped HslU homohexamer. The assembly of the HslU/HslV complex is dependent on binding of ATP.

It is found in the cytoplasm. Functionally, ATPase subunit of a proteasome-like degradation complex; this subunit has chaperone activity. The binding of ATP and its subsequent hydrolysis by HslU are essential for unfolding of protein substrates subsequently hydrolyzed by HslV. HslU recognizes the N-terminal part of its protein substrates and unfolds these before they are guided to HslV for hydrolysis. The chain is ATP-dependent protease ATPase subunit HslU from Shewanella sp. (strain MR-7).